The primary structure comprises 393 residues: Protein TsgA (393 aa).

12 helical membrane passes run 11 to 31 (WISF…GMVM), 51 to 71 (FLNA…EIVP), 78 to 98 (FGFI…SLAL), 101 to 121 (AAMF…TFLI), 134 to 154 (LLFT…VAAF), 162 to 182 (WYWV…LTFG), 206 to 226 (IGVL…LGFI), 245 to 265 (ALVS…SFIL), 273 to 293 (ILTV…TGTQ), 298 to 318 (WFIL…ITLG), 332 to 352 (FILT…GPIV), and 361 to 381 (LLTA…LGFV).

This sequence belongs to the major facilitator superfamily. TsgA family.

Its subcellular location is the cell inner membrane. This Salmonella dublin (strain CT_02021853) protein is Protein TsgA.